A 317-amino-acid polypeptide reads, in one-letter code: Putative ribosomal protein uL10-like (317 aa).

Tyr24 carries the post-translational modification Phosphotyrosine. At Thr59 the chain carries Phosphothreonine. The interval 292–317 (AAAPAKVEAKEESEESDEDMGFGLFD) is disordered. Lys297 participates in a covalent cross-link: Glycyl lysine isopeptide (Lys-Gly) (interchain with G-Cter in SUMO1); alternate. Residue Lys297 forms a Glycyl lysine isopeptide (Lys-Gly) (interchain with G-Cter in SUMO2); alternate linkage. Residues 302 to 311 (EESEESDEDM) show a composition bias toward acidic residues. Phosphoserine occurs at positions 304 and 307.

Belongs to the universal ribosomal protein uL10 family. In terms of assembly, P0 forms a pentameric complex by interaction with dimers of P1 and P2.

In terms of biological role, ribosomal protein P0 is the functional equivalent of E.coli protein L10. The protein is Putative ribosomal protein uL10-like (RPLP0P6) of Homo sapiens (Human).